Reading from the N-terminus, the 117-residue chain is Immunoglobulin kappa variable 1-9 (117 aa).

The signal sequence occupies residues M1–C22. The framework-1 stretch occupies residues D23–C45. The region spanning I24–P117 is the Ig-like domain. C45 and C110 form a disulfide bridge. Residues R46 to A56 are complementarity-determining-1. Residues W57–Y71 are framework-2. The segment at A72 to S78 is complementarity-determining-2. The tract at residues G79–C110 is framework-3. The segment at Q111–P117 is complementarity-determining-3.

In terms of assembly, immunoglobulins are composed of two identical heavy chains and two identical light chains; disulfide-linked.

Its subcellular location is the secreted. The protein localises to the cell membrane. In terms of biological role, v region of the variable domain of immunoglobulin light chains that participates in the antigen recognition. Immunoglobulins, also known as antibodies, are membrane-bound or secreted glycoproteins produced by B lymphocytes. In the recognition phase of humoral immunity, the membrane-bound immunoglobulins serve as receptors which, upon binding of a specific antigen, trigger the clonal expansion and differentiation of B lymphocytes into immunoglobulins-secreting plasma cells. Secreted immunoglobulins mediate the effector phase of humoral immunity, which results in the elimination of bound antigens. The antigen binding site is formed by the variable domain of one heavy chain, together with that of its associated light chain. Thus, each immunoglobulin has two antigen binding sites with remarkable affinity for a particular antigen. The variable domains are assembled by a process called V-(D)-J rearrangement and can then be subjected to somatic hypermutations which, after exposure to antigen and selection, allow affinity maturation for a particular antigen. The polypeptide is Immunoglobulin kappa variable 1-9 (Homo sapiens (Human)).